Consider the following 257-residue polypeptide: Transmembrane protein 101 (257 aa).

Transmembrane regions (helical) follow at residues 24–40, 52–72, 77–97, 110–130, 139–159, 182–202, 206–226, and 233–253; these read TRCP…LYAE, VPYL…MSFG, WFAL…YIGG, YSRT…AGEL, SLQS…AYSL, LFFV…YVTL, ILAV…SYWH, and FWNQ…AVIL.

The protein localises to the membrane. May activate NF-kappa-B signaling pathways. The protein is Transmembrane protein 101 (Tmem101) of Mus musculus (Mouse).